The sequence spans 343 residues: Zinc finger protein STP3 (343 aa).

Disordered regions lie at residues 31–56 (YNGE…SGSA) and 71–140 (SNDV…KPRK). A compositionally biased stretch (polar residues) spans 33–45 (GEASSASTHPTLP). 3 stretches are compositionally biased toward low complexity: residues 46 to 56 (NMNISNGSGSA), 71 to 86 (SNDV…FLPS), and 94 to 120 (SASA…AGPS). 2 positions are modified to phosphoserine: Ser71 and Ser111. A C2H2-type zinc finger spans residues 169–191 (HKCPICHRGFARNNDLLRHKKRH). Residues 198–222 (SQSGVLSNHNDGKGGSVSPNDDDTH) are disordered.

Its subcellular location is the nucleus. In Saccharomyces cerevisiae (strain ATCC 204508 / S288c) (Baker's yeast), this protein is Zinc finger protein STP3 (STP3).